The primary structure comprises 299 residues: Peroxisomal biogenesis factor 19 (299 aa).

The disordered stretch occupies residues 1-61 (MAAAEEGCGV…KRAPGDTAKD (61 aa)). The residue at position 2 (alanine 2) is an N-acetylalanine. The interval 2–56 (AAAEEGCGVGVEDDRELEELLESALDDFDKAKPSPEHAPTISAPDASGPQKRAPG) is docking to the peroxisome membrane and binding to PEX3. The tract at residues 2-91 (AAAEEGCGVG…QATAEFEKAM (90 aa)) is necessary for PEX19 function on peroxisome biogenesis. A compositionally biased stretch (acidic residues) spans 12-27 (VEDDRELEELLESALD). Phosphoserine is present on residues serine 35 and serine 66. Threonine 236 carries the post-translational modification Phosphothreonine. Cysteine 296 bears the Cysteine methyl ester mark. Cysteine 296 carries S-farnesyl cysteine lipidation. Positions 297–299 (LIM) are cleaved as a propeptide — removed in mature form.

The protein belongs to the peroxin-19 family. As to quaternary structure, interacts with a broad range of peroxisomal membrane proteins, including PEX3, PEX10, PEX11A, PEX11B, PEX12, PEX13, PEX14 and PEX16, PXMP2/PMP22, PXMP4/PMP24, SLC25A17/PMP34, ABCD1/ALDP, ABCD2/ALDRP, and ABCD3/PMP70. Also interacts with the tumor suppressor CDKN2A/p19ARF.

The protein resides in the cytoplasm. It localises to the peroxisome membrane. Its function is as follows. Necessary for early peroxisomal biogenesis. Acts both as a cytosolic chaperone and as an import receptor for peroxisomal membrane proteins (PMPs). Binds and stabilizes newly synthesized PMPs in the cytoplasm by interacting with their hydrophobic membrane-spanning domains, and targets them to the peroxisome membrane by binding to the integral membrane protein PEX3. Excludes CDKN2A from the nucleus and prevents its interaction with MDM2, which results in active degradation of TP53. In Mus musculus (Mouse), this protein is Peroxisomal biogenesis factor 19 (Pex19).